Here is a 233-residue protein sequence, read N- to C-terminus: Small ribosomal subunit protein uS2 (233 aa).

This sequence belongs to the universal ribosomal protein uS2 family.

The protein is Small ribosomal subunit protein uS2 of Bacillus mycoides (strain KBAB4) (Bacillus weihenstephanensis).